The following is a 399-amino-acid chain: Coenzyme A biosynthesis bifunctional protein CoaBC (399 aa).

Positions 1-190 (MQSLAGKKIL…FAPKILVGKR (190 aa)) are phosphopantothenoylcysteine decarboxylase. Cys-159 serves as the catalytic Proton donor. Positions 191–399 (VLITAGPTRE…AVMHLIHEQM (209 aa)) are phosphopantothenate--cysteine ligase. CTP is bound by residues Asp-279, Lys-289, 307 to 310 (PDIV), Phe-326, Lys-340, and Lys-344.

This sequence in the N-terminal section; belongs to the HFCD (homo-oligomeric flavin containing Cys decarboxylase) superfamily. In the C-terminal section; belongs to the PPC synthetase family. Requires Mg(2+) as cofactor. It depends on FMN as a cofactor.

It catalyses the reaction N-[(R)-4-phosphopantothenoyl]-L-cysteine + H(+) = (R)-4'-phosphopantetheine + CO2. It carries out the reaction (R)-4'-phosphopantothenate + L-cysteine + CTP = N-[(R)-4-phosphopantothenoyl]-L-cysteine + CMP + diphosphate + H(+). The protein operates within cofactor biosynthesis; coenzyme A biosynthesis; CoA from (R)-pantothenate: step 2/5. It functions in the pathway cofactor biosynthesis; coenzyme A biosynthesis; CoA from (R)-pantothenate: step 3/5. Its function is as follows. Catalyzes two sequential steps in the biosynthesis of coenzyme A. In the first step cysteine is conjugated to 4'-phosphopantothenate to form 4-phosphopantothenoylcysteine. In the second step the latter compound is decarboxylated to form 4'-phosphopantotheine. The chain is Coenzyme A biosynthesis bifunctional protein CoaBC from Vibrio cholerae serotype O1 (strain ATCC 39315 / El Tor Inaba N16961).